Reading from the N-terminus, the 161-residue chain is Prs ADP-ribosylating toxin (161 aa).

The protein belongs to the MbcT/ParT/Res family. As to quaternary structure, homodimer, forms heterotetrameric ParS(2)-ParT(2) complexes. In terms of processing, consumes NAD(+) and auto-ADP-ribosylates on the tryptic fragment Ala-47-Arg-66 in vitro. Also auto-ADP-ribosylates using NADP(+).

Its function is as follows. Toxic component of a type II toxin-antitoxin (TA) system. Expression in E.coli inhibits cell growth; bacteriostasis is neutralized by expression of cognate antitoxin ParS. ADP-ribosylates E.coli ribose-phosphate pyrophosphokinase (RPPK, prs) using NAD(+) in vitro; ADP-ribosylates RPPK on 'Lys-182' and 'Ser-202'. Cannot use NADP(+). Also auto-ADP-ribosylates in vitro; in the presence of RPPK auto-ADP-ribosylation decreases. This is Prs ADP-ribosylating toxin from Sphingobium sp. (strain YBL2).